A 1270-amino-acid polypeptide reads, in one-letter code: Nuclear exosome regulator NRDE2 (1270 aa).

Disordered regions lie at residues 1-22 (MFRA…ENPD) and 119-209 (SVKS…HTLM). Positions 119-135 (SVKSLNGCQDPPETSQQ) are enriched in polar residues. Residues 164–184 (QRSRSREKKRRKKERRRKRSS) are compositionally biased toward basic residues. Basic and acidic residues predominate over residues 192-204 (RSRDRSSRARDTS).

Belongs to the NRDE2 family. Interacts with nrde-3.

The protein localises to the nucleus. It localises to the nucleus speckle. It is found in the nucleolus. Protein of the nuclear speckles that regulates RNA exosomal degradation. Involved in short interfering RNAs-mediated silencing in nuclei. Functions with nrde-3 in the nuclear RNA-mediated gene silencing (RNAi) pathway to regulate gene expression via inhibition of RNA polymerases I and II during the elongation phase of transcription. Required for exogenous RNAi-induced H3K27 methylation. The polypeptide is Nuclear exosome regulator NRDE2 (nrde-2) (Caenorhabditis elegans).